A 152-amino-acid chain; its full sequence is MLDVGFGELFCFGIIALLVLGPDKLPVAARFAGRWYARIKRYISNIQNEIDRELNLSEFRKEMQDELDRLHTLEQTMQARLKEIEKASTEKIAEQPKQPIESEPSITPQKYIFCITPQTIVPFCHQKQHYQQPERYNDLVLESSSVELKIAV.

The chain crosses the membrane as a helical span at residues M1–G21.

The protein belongs to the TatB family. The Tat system comprises two distinct complexes: a TatABC complex, containing multiple copies of TatA, TatB and TatC subunits, and a separate TatA complex, containing only TatA subunits. Substrates initially bind to the TatABC complex, which probably triggers association of the separate TatA complex to form the active translocon.

Its subcellular location is the cell inner membrane. Its function is as follows. Part of the twin-arginine translocation (Tat) system that transports large folded proteins containing a characteristic twin-arginine motif in their signal peptide across membranes. Together with TatC, TatB is part of a receptor directly interacting with Tat signal peptides. TatB may form an oligomeric binding site that transiently accommodates folded Tat precursor proteins before their translocation. The sequence is that of Sec-independent protein translocase protein TatB from Acinetobacter baylyi (strain ATCC 33305 / BD413 / ADP1).